The chain runs to 1027 residues: MRLYVYILQAKDLPAKETFAKLHVGRHKSKTRVARDTSSPIWNEEFVFRISDVDEGDDVVVSILHHEQQDHQSIVSTGLIGKVRIPLTSVAAEENQTLLPTWFVIEKPSDGKFVNIECGKILLSLSLQGKWESTSGEKVLNDKQDIINLEGVKELEGSPKDLISSRDGKRRKHHDGKHIMKNIVNHIDKLFHKKEEISKRLHDESSVGQSVNSNYEDATDQCSSSATCTGFEEGLDLMQSSDSEREEMPENLTGGVLVDQKYLVSPCELNKFLFTPSSQFRKELAELQGLSDVQEGPWTMMQEDTPRLTRVVTYMRAATKMVKAVKATENQVYRKASGKQFAVFVSVSTPDVPYGNTFKIELLYKILPETEPTAGGEASRLIISWGIQFSQSTIMKGMIEGGARQGLKESFEQFSNLLAKTYKTLDPAVVLDKEQVIATVQSEPKTDLKSAFLYFWSSSVICAVLLSVYVVVHMLHCEPSKIQGFEFYGLDLPDSFGELFSSGILVLLLERVYIMTVHFVQARLHRGRDQGVKANGKGWILTIALIKGTNLASVEATELFDPYVVFTCNGKTRTSSVKLQAQDPQWNEVIEFDAMEEPPSVLDVEVFDFDGPFDQGASLGHAEINFLKHTADELADLSVALVGNHAQASQSKLQLRIFLENKNGVETMKDYLSKVEKEVGKKLNIRSPQKNSAFQKLFGLPHEEFLLKEYTCYLKRKLPVQGKLFLSARIVAFYSNVFGHKTKFYFLWEDIDDIQVLPPTFASLGSPLLLIILKKNRGLDAKHGAKSQDDEGRLSFYFQSFVSFDATSRTIMALWKTRTLSVDHRAQIVEEDQDVADPFLLPEAVTVVSDADALMMSKVYTCDLPCDVELVMKIFGGGELERKIMEKSGCLSYASTTWESKKPGVYERRLSYKYNHYVSVFGGGVTCAQQKSPAPNDEGWILNEIVALHDVPFGDHFRVHIRYEVKKAGVDCKTSKCEVYLKIRWLKTIKFEQRISKSIMEKFRNRFKVIFDLFQKESVANSSLTLL.

One can recognise a C2 1 domain in the interval 1–103 (MRLYVYILQA…ENQTLLPTWF (103 aa)). A compositionally biased stretch (basic and acidic residues) spans 158 to 167 (SPKDLISSRD). Disordered regions lie at residues 158-177 (SPKD…HDGK) and 201-223 (LHDE…DQCS). A compositionally biased stretch (basic residues) spans 168 to 177 (GKRRKHHDGK). A compositionally biased stretch (polar residues) spans 206 to 223 (SVGQSVNSNYEDATDQCS). In terms of domain architecture, VASt 1 spans 253–426 (TGGVLVDQKY…LLAKTYKTLD (174 aa)). Residues 452 to 472 (FLYFWSSSVICAVLLSVYVVV) traverse the membrane as a helical segment. The C2 2 domain maps to 516 to 639 (TVHFVQARLH…TADELADLSV (124 aa)). The GRAM domain maps to 693 to 756 (AFQKLFGLPH…LWEDIDDIQV (64 aa)). Residues 855 to 1018 (MMSKVYTCDL…VIFDLFQKES (164 aa)) form the VASt 2 domain.

Its subcellular location is the membrane. The sequence is that of C2 and GRAM domain-containing protein At5g50170 from Arabidopsis thaliana (Mouse-ear cress).